The chain runs to 1343 residues: DNA-directed RNA polymerase subunit beta (1343 aa).

Belongs to the RNA polymerase beta chain family. In terms of assembly, the RNAP catalytic core consists of 2 alpha, 1 beta, 1 beta' and 1 omega subunit. When a sigma factor is associated with the core the holoenzyme is formed, which can initiate transcription.

It catalyses the reaction RNA(n) + a ribonucleoside 5'-triphosphate = RNA(n+1) + diphosphate. DNA-dependent RNA polymerase catalyzes the transcription of DNA into RNA using the four ribonucleoside triphosphates as substrates. This Shewanella frigidimarina (strain NCIMB 400) protein is DNA-directed RNA polymerase subunit beta.